A 232-amino-acid polypeptide reads, in one-letter code: Small ribosomal subunit protein uS3 (232 aa).

The KH type-2 domain maps to 39-107 (IRKFLKTKLY…DIAINIKEER (69 aa)). Residues 213-222 (QADKNEDTSP) are compositionally biased toward basic and acidic residues. The tract at residues 213-232 (QADKNEDTSPKKPRRARRGK) is disordered. A compositionally biased stretch (basic residues) spans 223-232 (KKPRRARRGK).

Belongs to the universal ribosomal protein uS3 family. In terms of assembly, part of the 30S ribosomal subunit. Forms a tight complex with proteins S10 and S14.

In terms of biological role, binds the lower part of the 30S subunit head. Binds mRNA in the 70S ribosome, positioning it for translation. The sequence is that of Small ribosomal subunit protein uS3 from Campylobacter fetus subsp. fetus (strain 82-40).